A 694-amino-acid polypeptide reads, in one-letter code: Polyribonucleotide nucleotidyltransferase (694 aa).

Positions 485 and 491 each coordinate Mg(2+). Positions 552-611 (PRIETMQIKPNKIATVIGPGGKQIRQIIEEAGVQIDINDSGLVSISASSPQAIEKAKSMI) constitute a KH domain. The region spanning 621-689 (GKIYEGRVTS…EKGQYKLSHK (69 aa)) is the S1 motif domain.

It belongs to the polyribonucleotide nucleotidyltransferase family. It depends on Mg(2+) as a cofactor.

It is found in the cytoplasm. The enzyme catalyses RNA(n+1) + phosphate = RNA(n) + a ribonucleoside 5'-diphosphate. Involved in mRNA degradation. Catalyzes the phosphorolysis of single-stranded polyribonucleotides processively in the 3'- to 5'-direction. This chain is Polyribonucleotide nucleotidyltransferase, found in Chlamydia caviae (strain ATCC VR-813 / DSM 19441 / 03DC25 / GPIC) (Chlamydophila caviae).